The chain runs to 985 residues: Alanine--tRNA ligase, mitochondrial (985 aa).

Residues 1 to 23 (MAASVAAAARRLRRAIRRSPAWR) constitute a mitochondrion transit peptide. ATP contacts are provided by residues Arg-110, His-128, Trp-210, and 240–242 (LWN). The L-alanine site is built by Asn-242 and Asp-265. Gly-269 is an ATP binding site. The Zn(2+) site is built by His-632, His-636, Cys-749, and His-753.

It belongs to the class-II aminoacyl-tRNA synthetase family. As to quaternary structure, monomer. Zn(2+) serves as cofactor.

It localises to the mitochondrion. It catalyses the reaction tRNA(Ala) + L-alanine + ATP = L-alanyl-tRNA(Ala) + AMP + diphosphate. It carries out the reaction (S)-lactate + ATP + H(+) = (S)-lactoyl-AMP + diphosphate. The catalysed reaction is (S)-lactoyl-AMP + L-lysyl-[protein] = N(6)-[(S)-lactoyl]-L-lysyl-[protein] + AMP + 2 H(+). Its function is as follows. Catalyzes the attachment of alanine to tRNA(Ala) in a two-step reaction: alanine is first activated by ATP to form Ala-AMP and then transferred to the acceptor end of tRNA(Ala). Also edits incorrectly charged tRNA(Ala) via its editing domain. In presence of high levels of lactate, also acts as a protein lactyltransferase that mediates lactylation of lysine residues in target proteins, such as CGAS. Acts as an inhibitor of cGAS/STING signaling by catalyzing lactylation of CGAS, preventing the formation of liquid-like droplets in which CGAS is activated. The polypeptide is Alanine--tRNA ligase, mitochondrial (Homo sapiens (Human)).